We begin with the raw amino-acid sequence, 380 residues long: DNA replication and repair protein RecF (380 aa).

Residue 30-37 (GNNAQGKS) participates in ATP binding.

It belongs to the RecF family.

The protein localises to the cytoplasm. The RecF protein is involved in DNA metabolism; it is required for DNA replication and normal SOS inducibility. RecF binds preferentially to single-stranded, linear DNA. It also seems to bind ATP. The chain is DNA replication and repair protein RecF from Crocosphaera subtropica (strain ATCC 51142 / BH68) (Cyanothece sp. (strain ATCC 51142)).